We begin with the raw amino-acid sequence, 726 residues long: Probable dipeptidyl-peptidase 5 (726 aa).

Positions 1 to 19 (MAAAKWLIASLAFASSGLA) are cleaved as a signal peptide. 2 N-linked (GlcNAc...) asparagine glycosylation sites follow: N96 and N252. Positions 269–291 (AEPINKRNGPRTPQGIEGASSSP) are disordered. The Charge relay system role is filled by S558. N605 is a glycosylation site (N-linked (GlcNAc...) asparagine). Residues D641 and H673 each act as charge relay system in the active site. N699 carries N-linked (GlcNAc...) asparagine glycosylation.

This sequence belongs to the peptidase S9C family.

It localises to the secreted. Its function is as follows. Extracellular dipeptidyl-peptidase which removes N-terminal dipeptides sequentially from polypeptides having unsubstituted N-termini. Contributes to pathogenicity. This Trichophyton verrucosum (strain HKI 0517) protein is Probable dipeptidyl-peptidase 5 (DPP5).